The chain runs to 459 residues: MDTIAAISTPMGEGAIAIVRMSGPEALAIADKVYKGPRGKRLSSVDSHTINYGHIVDPETEKVVEEVMVSVLKAPKTFTREDIVEINCHGGLVTVNQVLQLVLREGARLAEPGEFTKRAFLNGRIDLSQAEAVMDLIRAKTDRAMNVAMNQMEGRLSSLIKRLRAEILETLAHVEVNIDYPEYDDVEEMTHKMLIEKATKVKKEIEALLTTSEQGKILREGISTVIIGRPNVGKSSLLNSLVHETKAIVTDIPGTTRDVIEEYVNVRGVPLRLVDTAGIRETEDIVERIGVERSRQVLKEADLILLVLNYSESLSDEDIKLFEATKGMDIIVIVNKTDLEQKLDLDRVRELAGNQPVVTTSLLKEEGIDELEEAIQSLFFTGAIESGDLTYVSNTRHISLLHEAKRAITDALEGIENDVPIDMVQIDLTRCWEVLGEIIGDAVHESLIDQLFSQFCLGK.

Residues Arg20, Glu85, and Arg124 each contribute to the (6S)-5-formyl-5,6,7,8-tetrahydrofolate site. Residues 221–380 (GISTVIIGRP…LEEAIQSLFF (160 aa)) enclose the TrmE-type G domain. Asn231 contributes to the K(+) binding site. Residues 231–236 (NVGKSS), 250–256 (TDIPGTT), and 275–278 (DTAG) each bind GTP. Ser235 is a binding site for Mg(2+). 3 residues coordinate K(+): Thr250, Ile252, and Thr255. Thr256 is a binding site for Mg(2+). A (6S)-5-formyl-5,6,7,8-tetrahydrofolate-binding site is contributed by Lys459.

Belongs to the TRAFAC class TrmE-Era-EngA-EngB-Septin-like GTPase superfamily. TrmE GTPase family. As to quaternary structure, homodimer. Heterotetramer of two MnmE and two MnmG subunits. K(+) serves as cofactor.

It localises to the cytoplasm. Its function is as follows. Exhibits a very high intrinsic GTPase hydrolysis rate. Involved in the addition of a carboxymethylaminomethyl (cmnm) group at the wobble position (U34) of certain tRNAs, forming tRNA-cmnm(5)s(2)U34. The chain is tRNA modification GTPase MnmE from Bacillus licheniformis (strain ATCC 14580 / DSM 13 / JCM 2505 / CCUG 7422 / NBRC 12200 / NCIMB 9375 / NCTC 10341 / NRRL NRS-1264 / Gibson 46).